A 188-amino-acid chain; its full sequence is Putative manganese efflux pump MntP (188 aa).

The next 6 helical transmembrane spans lie at 3 to 23 (LYAL…VALA), 35 to 55 (IAAT…AGWV), 63 to 83 (FISE…GLKM), 104 to 126 (WMTV…GLAF), 140 to 160 (MAAT…GVLF), and 167 to 187 (AGGL…LGLI).

Belongs to the MntP (TC 9.B.29) family.

The protein localises to the cell inner membrane. Probably functions as a manganese efflux pump. The sequence is that of Putative manganese efflux pump MntP from Neisseria gonorrhoeae (strain ATCC 700825 / FA 1090).